A 1033-amino-acid chain; its full sequence is E3 ubiquitin-protein ligase Topors (1033 aa).

Positions 1–10 (MGSQPPPPGS) are enriched in pro residues. The segment at 1 to 36 (MGSQPPPPGSPLSREEGEAPPLVPAEEGRRRSRRVR) is disordered. The tract at residues 52–376 (ELASNGPAVP…MAAFDQHANY (325 aa)) is required for DNA-binding. Glycyl lysine isopeptide (Lys-Gly) (interchain with G-Cter in SUMO2) cross-links involve residues lysine 74, lysine 77, lysine 84, and lysine 89. Serine 99 is modified (phosphoserine). The RING-type zinc finger occupies 104–143 (CPICLDRFDNVSYLDRCLHKFCFRCVQEWSKNKAECPLCK). Residue lysine 160 forms a Glycyl lysine isopeptide (Lys-Gly) (interchain with G-Cter in SUMO2) linkage. Serine 196 is subject to Phosphoserine. Residue lysine 251 forms a Glycyl lysine isopeptide (Lys-Gly) (interchain with G-Cter in SUMO2) linkage. Disordered regions lie at residues 414–477 (QAPW…SSSD) and 496–692 (VELS…RYYL). Over residues 434 to 444 (VGVSSLLNSSD) the composition is skewed to low complexity. The sumoylation and localization to discrete nuclear foci stretch occupies residues 438-574 (SLLNSSDSSD…RSTSLPAPRD (137 aa)). The interaction with SUMO1 stretch occupies residues 438–654 (SLLNSSDSSD…RSRTRDSSWS (217 aa)). Polar residues predominate over residues 455–464 (TTSQIQGVQT). The tract at residues 457 to 731 (SQIQGVQTND…RRTLSRAHYS (275 aa)) is interaction with p53/TP53. The segment at 457–879 (SQIQGVQTND…GKATDTSKHH (423 aa)) is interaction with TOP1. Over residues 465-477 (NDDVNNDSDSSSD) the composition is skewed to low complexity. Serine 500 is modified (phosphoserine). Residues 507–518 (PYEKVETVKTQE) are compositionally biased toward basic and acidic residues. Residues 522 to 535 (SYSSGDSDVSRASS) show a composition bias toward low complexity. The span at 540-566 (LGKDEQMSKSHCDSDTRISSKKEEKRS) shows a compositional bias: basic and acidic residues. Residue lysine 561 forms a Glycyl lysine isopeptide (Lys-Gly) (interchain with G-Cter in SUMO) linkage. Serine 585 is subject to Phosphoserine. 2 stretches are compositionally biased toward basic residues: residues 613–629 (RNHR…KRSR) and 637–647 (PRARKDKKRSR). A compositionally biased stretch (low complexity) spans 654-669 (SRRSQTLSLSSGSTSR). A Glycyl lysine isopeptide (Lys-Gly) (interchain with G-Cter in SUMO2) cross-link involves residue lysine 701. Disordered stretches follow at residues 713-934 (RDGY…PIQD) and 970-1033 (TVEN…CDVS). The residue at position 718 (serine 718) is a Phosphoserine; by PLK1. The span at 721–730 (RRRTLSRAHY) shows a compositional bias: basic residues. Residues 731–747 (SRQSSSPEFRIQSFSER) show a composition bias toward polar residues. Serine 734 bears the Phosphoserine mark. Residues 770-780 (SVSSNRSRTTS) are compositionally biased toward low complexity. Positions 815 to 837 (FTSKGKDSHYQKSKLDGSYKNES) are enriched in basic and acidic residues. Residues lysine 818 and lysine 834 each participate in a glycyl lysine isopeptide (Lys-Gly) (interchain with G-Cter in SUMO2) cross-link. Over residues 851–860 (KHKRRRRRTR) the composition is skewed to basic residues. The tract at residues 851-914 (KHKRRRRRTR…ITIDSDSDGE (64 aa)) is interaction with UBE2I. Serine 861 and serine 863 each carry phosphoserine. Residues 877-894 (KHHKKKKKKHKKKHKKHH) show a composition bias toward basic residues. Phosphoserine is present on residues serine 909, serine 911, serine 999, serine 1016, and serine 1025. The span at 992-1008 (TFASDLESQSSNVSIQA) shows a compositional bias: polar residues.

As to quaternary structure, interacts with TOP1. Interacts with the SUMO1 conjugating enzyme UBE2I. Interacts with SUMO1. Interacts with NKX3-1; polyubiquitinates NKX3-1 and induces its proteasomal degradation. Interacts with SIN3A; sumoylates SIN3A. Interacts with IKBKE; induced by DNA damage. Interacts with p53/TP53. Interacts with PARK7/DJ-1. In terms of processing, phosphorylation at Ser-99 regulates the E3 ubiquitin-protein ligase activity but not the SUMO1-protein ligase activity. Phosphorylation at Ser-718 increases the E3 ubiquitin-protein ligase activity versus the E3 SUMO1-protein ligase activity resulting in increased p53/TP53 ubiquitination and degradation. Sumoylated.

It is found in the nucleus. The protein localises to the PML body. The catalysed reaction is S-ubiquitinyl-[E2 ubiquitin-conjugating enzyme]-L-cysteine + [acceptor protein]-L-lysine = [E2 ubiquitin-conjugating enzyme]-L-cysteine + N(6)-ubiquitinyl-[acceptor protein]-L-lysine.. Its function is as follows. Functions as an E3 ubiquitin-protein ligase and as a E3 SUMO1-protein ligase. Probable tumor suppressor involved in cell growth, cell proliferation and apoptosis that regulates p53/TP53 stability through ubiquitin-dependent degradation. May regulate chromatin modification through sumoylation of several chromatin modification-associated proteins. May be involved in DNA-damage-induced cell death through IKBKE sumoylation. The chain is E3 ubiquitin-protein ligase Topors (Topors) from Mus musculus (Mouse).